A 174-amino-acid polypeptide reads, in one-letter code: MTRILGIDPGSQRTGIGIIDIDEGGRSRHVHHAPLILLGEGDFSQRLKRLLHGLGELIETYRPDEVAIEKVFMGKSAASALKLGHARGAAICAVVMRDLPVHEYAATEVKLALVGKGGADKVQVQHMVGIMLNLKGKLQPDAADALAVAITHAHVRATAQCLGVNTQQAWSRKK.

Residues D8, E69, and D141 contribute to the active site. The Mg(2+) site is built by D8, E69, and D141.

It belongs to the RuvC family. In terms of assembly, homodimer which binds Holliday junction (HJ) DNA. The HJ becomes 2-fold symmetrical on binding to RuvC with unstacked arms; it has a different conformation from HJ DNA in complex with RuvA. In the full resolvosome a probable DNA-RuvA(4)-RuvB(12)-RuvC(2) complex forms which resolves the HJ. It depends on Mg(2+) as a cofactor.

It is found in the cytoplasm. The enzyme catalyses Endonucleolytic cleavage at a junction such as a reciprocal single-stranded crossover between two homologous DNA duplexes (Holliday junction).. In terms of biological role, the RuvA-RuvB-RuvC complex processes Holliday junction (HJ) DNA during genetic recombination and DNA repair. Endonuclease that resolves HJ intermediates. Cleaves cruciform DNA by making single-stranded nicks across the HJ at symmetrical positions within the homologous arms, yielding a 5'-phosphate and a 3'-hydroxyl group; requires a central core of homology in the junction. The consensus cleavage sequence is 5'-(A/T)TT(C/G)-3'. Cleavage occurs on the 3'-side of the TT dinucleotide at the point of strand exchange. HJ branch migration catalyzed by RuvA-RuvB allows RuvC to scan DNA until it finds its consensus sequence, where it cleaves and resolves the cruciform DNA. The sequence is that of Crossover junction endodeoxyribonuclease RuvC from Xanthomonas oryzae pv. oryzae (strain PXO99A).